Consider the following 758-residue polypeptide: 3-isopropylmalate dehydratase (758 aa).

The [4Fe-4S] cluster site is built by C359, C420, and C423. S486 and S488 each carry phosphoserine.

The protein belongs to the aconitase/IPM isomerase family. [4Fe-4S] cluster serves as cofactor.

The enzyme catalyses (2R,3S)-3-isopropylmalate = (2S)-2-isopropylmalate. The protein operates within amino-acid biosynthesis; L-leucine biosynthesis; L-leucine from 3-methyl-2-oxobutanoate: step 2/4. Functionally, catalyzes the isomerization between 2-isopropylmalate and 3-isopropylmalate, via the formation of 2-isopropylmaleate. This is 3-isopropylmalate dehydratase (leu2) from Schizosaccharomyces pombe (strain 972 / ATCC 24843) (Fission yeast).